The primary structure comprises 222 residues: ATP-dependent dethiobiotin synthetase BioD (222 aa).

ATP is bound at residue 12-17 (DVGKTF). T16 contacts Mg(2+). K37 is an active-site residue. Position 41 (S41) interacts with substrate. ATP is bound by residues D54 and 113–116 (EGAG). Mg(2+) is bound by residues D54 and E113.

The protein belongs to the dethiobiotin synthetase family. As to quaternary structure, homodimer. Mg(2+) serves as cofactor.

It localises to the cytoplasm. It carries out the reaction (7R,8S)-7,8-diammoniononanoate + CO2 + ATP = (4R,5S)-dethiobiotin + ADP + phosphate + 3 H(+). It functions in the pathway cofactor biosynthesis; biotin biosynthesis; biotin from 7,8-diaminononanoate: step 1/2. In terms of biological role, catalyzes a mechanistically unusual reaction, the ATP-dependent insertion of CO2 between the N7 and N8 nitrogen atoms of 7,8-diaminopelargonic acid (DAPA, also called 7,8-diammoniononanoate) to form a ureido ring. The sequence is that of ATP-dependent dethiobiotin synthetase BioD from Anoxybacillus flavithermus (strain DSM 21510 / WK1).